Here is a 309-residue protein sequence, read N- to C-terminus: Manganese ABC transporter substrate-binding lipoprotein PsaA (309 aa).

A signal peptide spans 1–19 (MKKLGTLFVLFLSVIVLVA). C20 carries the N-palmitoyl cysteine lipid modification. A lipid anchor (S-diacylglycerol cysteine) is attached at C20. Positions 67, 139, 205, and 280 each coordinate Mn(2+).

Belongs to the bacterial solute-binding protein 9 family. Lipoprotein receptor antigen (Lrai) subfamily.

It is found in the cell membrane. Its function is as follows. Part of the ATP-riven (ABC) transport system PsaABC involved in manganese import. Binds manganese with high affinity and specificity and delivers it to the membrane permease for translocation into the cytoplasm. Also acts as an adhesin which is involved on adherence to extracellular matrix. The polypeptide is Manganese ABC transporter substrate-binding lipoprotein PsaA (psaA) (Streptococcus mitis).